The sequence spans 199 residues: MNLFQRVKYNFEESIKTKTAAIELLVDPIVQAGELMSQCLLNEHKILSCGNGGSAADAQHFSSEMLNRFETERPSFPALALTTDASTVTAIANDYSYAEVFSKQIAGLGSTGDILLAISTSGHSKNILQAITAAHIRGMNVVALTGRDGGELFTLLGTDDIEIRVPAESTARIQETHALIIHCLCDIIDRKLIPSSEDH.

Residues 36–198 (MSQCLLNEHK…DRKLIPSSED (163 aa)) form the SIS domain. 51–53 (NGG) is a binding site for substrate. Zn(2+) contacts are provided by His60 and Glu64. Substrate contacts are provided by residues Glu64, 93–94 (ND), 119–121 (STS), Ser124, and Gln174. 2 residues coordinate Zn(2+): Gln174 and His182.

Belongs to the SIS family. GmhA subfamily. As to quaternary structure, homotetramer. Zn(2+) serves as cofactor.

It is found in the cytoplasm. It catalyses the reaction 2 D-sedoheptulose 7-phosphate = D-glycero-alpha-D-manno-heptose 7-phosphate + D-glycero-beta-D-manno-heptose 7-phosphate. It functions in the pathway carbohydrate biosynthesis; D-glycero-D-manno-heptose 7-phosphate biosynthesis; D-glycero-alpha-D-manno-heptose 7-phosphate and D-glycero-beta-D-manno-heptose 7-phosphate from sedoheptulose 7-phosphate: step 1/1. Its function is as follows. Catalyzes the isomerization of sedoheptulose 7-phosphate in D-glycero-D-manno-heptose 7-phosphate. This is Phosphoheptose isomerase from Coxiella burnetii (strain RSA 331 / Henzerling II).